We begin with the raw amino-acid sequence, 432 residues long: Adenylosuccinate synthetase (432 aa).

GTP-binding positions include 13-19 (GDEGKGK) and 41-43 (GHT). The active-site Proton acceptor is the Asp-14. Residues Asp-14 and Gly-41 each coordinate Mg(2+). IMP is bound by residues 14 to 17 (DEGK), 39 to 42 (NAGH), Thr-130, Arg-144, Gln-225, Thr-240, and Arg-304. His-42 (proton donor) is an active-site residue. 300-306 (ATTGRRR) contributes to the substrate binding site. GTP-binding positions include Arg-306, 332–334 (KLD), and 415–417 (STG).

Belongs to the adenylosuccinate synthetase family. Homodimer. It depends on Mg(2+) as a cofactor.

It is found in the cytoplasm. It catalyses the reaction IMP + L-aspartate + GTP = N(6)-(1,2-dicarboxyethyl)-AMP + GDP + phosphate + 2 H(+). The protein operates within purine metabolism; AMP biosynthesis via de novo pathway; AMP from IMP: step 1/2. Plays an important role in the de novo pathway of purine nucleotide biosynthesis. Catalyzes the first committed step in the biosynthesis of AMP from IMP. The chain is Adenylosuccinate synthetase from Baumannia cicadellinicola subsp. Homalodisca coagulata.